The primary structure comprises 333 residues: Holliday junction branch migration complex subunit RuvB (333 aa).

The tract at residues 1–182 (MEERLVSGEV…FGVISRLEYY (182 aa)) is large ATPase domain (RuvB-L). ATP is bound by residues leucine 21, arginine 22, glycine 63, lysine 66, threonine 67, threonine 68, 129-131 (EDY), arginine 172, tyrosine 182, and arginine 219. Position 67 (threonine 67) interacts with Mg(2+). Residues 183–253 (HVDQLAQIIE…LAVEALERLQ (71 aa)) are small ATPAse domain (RuvB-S). A head domain (RuvB-H) region spans residues 256-333 (RLGLDQIDHK…THLGMEVPKR (78 aa)). Residues arginine 311 and arginine 316 each contribute to the DNA site.

Belongs to the RuvB family. Homohexamer. Forms an RuvA(8)-RuvB(12)-Holliday junction (HJ) complex. HJ DNA is sandwiched between 2 RuvA tetramers; dsDNA enters through RuvA and exits via RuvB. An RuvB hexamer assembles on each DNA strand where it exits the tetramer. Each RuvB hexamer is contacted by two RuvA subunits (via domain III) on 2 adjacent RuvB subunits; this complex drives branch migration. In the full resolvosome a probable DNA-RuvA(4)-RuvB(12)-RuvC(2) complex forms which resolves the HJ.

The protein resides in the cytoplasm. The catalysed reaction is ATP + H2O = ADP + phosphate + H(+). The RuvA-RuvB-RuvC complex processes Holliday junction (HJ) DNA during genetic recombination and DNA repair, while the RuvA-RuvB complex plays an important role in the rescue of blocked DNA replication forks via replication fork reversal (RFR). RuvA specifically binds to HJ cruciform DNA, conferring on it an open structure. The RuvB hexamer acts as an ATP-dependent pump, pulling dsDNA into and through the RuvAB complex. RuvB forms 2 homohexamers on either side of HJ DNA bound by 1 or 2 RuvA tetramers; 4 subunits per hexamer contact DNA at a time. Coordinated motions by a converter formed by DNA-disengaged RuvB subunits stimulates ATP hydrolysis and nucleotide exchange. Immobilization of the converter enables RuvB to convert the ATP-contained energy into a lever motion, pulling 2 nucleotides of DNA out of the RuvA tetramer per ATP hydrolyzed, thus driving DNA branch migration. The RuvB motors rotate together with the DNA substrate, which together with the progressing nucleotide cycle form the mechanistic basis for DNA recombination by continuous HJ branch migration. Branch migration allows RuvC to scan DNA until it finds its consensus sequence, where it cleaves and resolves cruciform DNA. In Geobacillus kaustophilus (strain HTA426), this protein is Holliday junction branch migration complex subunit RuvB.